The chain runs to 536 residues: Multicopper oxidase CueO (536 aa).

Positions 1-28 form a signal peptide, tat-type signal; that stretch reads MLRRDFLKYSVALGVASALPLWSRAAFA. Plastocyanin-like domains lie at 53–165, 229–295, and 424–536; these read KAGQ…IEDD, GWLR…AFDL, and FHNA…GFTV. Positions 101, 103, 141, and 143 each coordinate Cu cation. The Cu cation site is built by histidine 463, histidine 466, histidine 468, histidine 519, cysteine 520, histidine 521, and histidine 525.

This sequence belongs to the multicopper oxidase family. As to quaternary structure, monomer. The cofactor is Cu cation. In terms of processing, predicted to be exported by the Tat system. The position of the signal peptide cleavage has not been experimentally proven.

The protein localises to the periplasm. The enzyme catalyses 4 Cu(+) + O2 + 4 H(+) = 4 Cu(2+) + 2 H2O. Functionally, multicopper oxidase involved in copper homeostasis and copper tolerance under both aerobic and anaerobic conditions. Is responsible for the oxidation of Cu(+) to the less harmful Cu(2+) in the periplasm, thereby preventing Cu(+) from entering the cytoplasm. This Salmonella typhimurium (strain LT2 / SGSC1412 / ATCC 700720) protein is Multicopper oxidase CueO (cueO).